A 382-amino-acid polypeptide reads, in one-letter code: Histidinol-phosphate aminotransferase (382 aa).

Residue Lys-215 is modified to N6-(pyridoxal phosphate)lysine. Positions 360-382 (NSNNIDNQSKTHSQTSSIRKGTI) are disordered.

The protein belongs to the class-II pyridoxal-phosphate-dependent aminotransferase family. Histidinol-phosphate aminotransferase subfamily. As to quaternary structure, homodimer. Pyridoxal 5'-phosphate is required as a cofactor.

It catalyses the reaction L-histidinol phosphate + 2-oxoglutarate = 3-(imidazol-4-yl)-2-oxopropyl phosphate + L-glutamate. It functions in the pathway amino-acid biosynthesis; L-histidine biosynthesis; L-histidine from 5-phospho-alpha-D-ribose 1-diphosphate: step 7/9. The chain is Histidinol-phosphate aminotransferase from Yersinia pseudotuberculosis serotype IB (strain PB1/+).